Consider the following 351-residue polypeptide: Fructose-1,6-bisphosphatase class 1 1 (351 aa).

Mg(2+) is bound by residues glutamate 84, aspartate 106, leucine 108, and aspartate 109. Residues 109–112 and asparagine 205 each bind substrate; that span reads DGSS. Glutamate 277 contacts Mg(2+).

The protein belongs to the FBPase class 1 family. In terms of assembly, homotetramer. Mg(2+) serves as cofactor.

The protein localises to the cytoplasm. The enzyme catalyses beta-D-fructose 1,6-bisphosphate + H2O = beta-D-fructose 6-phosphate + phosphate. It participates in carbohydrate biosynthesis; Calvin cycle. The sequence is that of Fructose-1,6-bisphosphatase class 1 1 from Methylibium petroleiphilum (strain ATCC BAA-1232 / LMG 22953 / PM1).